Consider the following 381-residue polypeptide: Queuine tRNA-ribosyltransferase (381 aa).

The active-site Proton acceptor is the D92. Substrate-binding positions include 92–96 (DSGGF), D146, Q190, and G217. The tract at residues 248–254 (GVGRPED) is RNA binding. D267 serves as the catalytic Nucleophile. Residues 272-276 (TRNAR) are RNA binding; important for wobble base 34 recognition. The Zn(2+) site is built by C305, C307, C310, and H337.

It belongs to the queuine tRNA-ribosyltransferase family. In terms of assembly, homodimer. Within each dimer, one monomer is responsible for RNA recognition and catalysis, while the other monomer binds to the replacement base PreQ1. It depends on Zn(2+) as a cofactor.

The enzyme catalyses 7-aminomethyl-7-carbaguanine + guanosine(34) in tRNA = 7-aminomethyl-7-carbaguanosine(34) in tRNA + guanine. Its pathway is tRNA modification; tRNA-queuosine biosynthesis. Its function is as follows. Catalyzes the base-exchange of a guanine (G) residue with the queuine precursor 7-aminomethyl-7-deazaguanine (PreQ1) at position 34 (anticodon wobble position) in tRNAs with GU(N) anticodons (tRNA-Asp, -Asn, -His and -Tyr). Catalysis occurs through a double-displacement mechanism. The nucleophile active site attacks the C1' of nucleotide 34 to detach the guanine base from the RNA, forming a covalent enzyme-RNA intermediate. The proton acceptor active site deprotonates the incoming PreQ1, allowing a nucleophilic attack on the C1' of the ribose to form the product. After dissociation, two additional enzymatic reactions on the tRNA convert PreQ1 to queuine (Q), resulting in the hypermodified nucleoside queuosine (7-(((4,5-cis-dihydroxy-2-cyclopenten-1-yl)amino)methyl)-7-deazaguanosine). The sequence is that of Queuine tRNA-ribosyltransferase from Xanthomonas euvesicatoria pv. vesicatoria (strain 85-10) (Xanthomonas campestris pv. vesicatoria).